A 130-amino-acid polypeptide reads, in one-letter code: Small ribosomal subunit protein uS8B (130 aa).

Belongs to the universal ribosomal protein uS8 family. Component of the small ribosomal subunit (SSU). Mature yeast ribosomes consist of a small (40S) and a large (60S) subunit. The 40S small subunit contains 1 molecule of ribosomal RNA (18S rRNA) and 33 different proteins (encoded by 57 genes). The large 60S subunit contains 3 rRNA molecules (25S, 5.8S and 5S rRNA) and 46 different proteins (encoded by 81 genes).

The protein resides in the cytoplasm. In terms of biological role, component of the ribosome, a large ribonucleoprotein complex responsible for the synthesis of proteins in the cell. The small ribosomal subunit (SSU) binds messenger RNAs (mRNAs) and translates the encoded message by selecting cognate aminoacyl-transfer RNA (tRNA) molecules. The large subunit (LSU) contains the ribosomal catalytic site termed the peptidyl transferase center (PTC), which catalyzes the formation of peptide bonds, thereby polymerizing the amino acids delivered by tRNAs into a polypeptide chain. The nascent polypeptides leave the ribosome through a tunnel in the LSU and interact with protein factors that function in enzymatic processing, targeting, and the membrane insertion of nascent chains at the exit of the ribosomal tunnel. The protein is Small ribosomal subunit protein uS8B of Saccharomyces cerevisiae (strain ATCC 204508 / S288c) (Baker's yeast).